Reading from the N-terminus, the 190-residue chain is Holliday junction branch migration complex subunit RuvA (190 aa).

The interval 1–65 is domain I; that stretch reads MIGNLRGIVD…ENVTQLYGFI (65 aa). Residues 66–143 form a domain II region; sequence SKEEQQCLRL…KLEINNNHFH (78 aa). Residues 144-147 form a flexible linker region; the sequence is SISE. The domain III stretch occupies residues 147 to 190; the sequence is EDALSALINLGYERTKAYDTIKKIEDESPNLDTKDIIRMALKTI.

It belongs to the RuvA family. In terms of assembly, homotetramer. Forms an RuvA(8)-RuvB(12)-Holliday junction (HJ) complex. HJ DNA is sandwiched between 2 RuvA tetramers; dsDNA enters through RuvA and exits via RuvB. An RuvB hexamer assembles on each DNA strand where it exits the tetramer. Each RuvB hexamer is contacted by two RuvA subunits (via domain III) on 2 adjacent RuvB subunits; this complex drives branch migration. In the full resolvosome a probable DNA-RuvA(4)-RuvB(12)-RuvC(2) complex forms which resolves the HJ.

The protein resides in the cytoplasm. Functionally, the RuvA-RuvB-RuvC complex processes Holliday junction (HJ) DNA during genetic recombination and DNA repair, while the RuvA-RuvB complex plays an important role in the rescue of blocked DNA replication forks via replication fork reversal (RFR). RuvA specifically binds to HJ cruciform DNA, conferring on it an open structure. The RuvB hexamer acts as an ATP-dependent pump, pulling dsDNA into and through the RuvAB complex. HJ branch migration allows RuvC to scan DNA until it finds its consensus sequence, where it cleaves and resolves the cruciform DNA. In Wolbachia pipientis subsp. Culex pipiens (strain wPip), this protein is Holliday junction branch migration complex subunit RuvA.